Consider the following 154-residue polypeptide: Large ribosomal subunit protein uL13 (154 aa).

This sequence belongs to the universal ribosomal protein uL13 family. In terms of assembly, part of the 50S ribosomal subunit.

Its function is as follows. This protein is one of the early assembly proteins of the 50S ribosomal subunit, although it is not seen to bind rRNA by itself. It is important during the early stages of 50S assembly. This Rhodopseudomonas palustris (strain BisB18) protein is Large ribosomal subunit protein uL13.